The sequence spans 234 residues: Octanoyltransferase (234 aa).

Positions 50–234 (GEAPELVWLL…AFEQVFGPTR (185 aa)) constitute a BPL/LPL catalytic domain. Substrate contacts are provided by residues 88-95 (RGGQITYH), 163-165 (AIG), and 176-178 (GIA). The Acyl-thioester intermediate role is filled by Cys-194.

Belongs to the LipB family.

It is found in the cytoplasm. The catalysed reaction is octanoyl-[ACP] + L-lysyl-[protein] = N(6)-octanoyl-L-lysyl-[protein] + holo-[ACP] + H(+). It functions in the pathway protein modification; protein lipoylation via endogenous pathway; protein N(6)-(lipoyl)lysine from octanoyl-[acyl-carrier-protein]: step 1/2. Catalyzes the transfer of endogenously produced octanoic acid from octanoyl-acyl-carrier-protein onto the lipoyl domains of lipoate-dependent enzymes. Lipoyl-ACP can also act as a substrate although octanoyl-ACP is likely to be the physiological substrate. The protein is Octanoyltransferase of Rhodopseudomonas palustris (strain BisA53).